Reading from the N-terminus, the 173-residue chain is Crossover junction endodeoxyribonuclease RuvC (173 aa).

Residues D8, E67, and D139 contribute to the active site. The Mg(2+) site is built by D8, E67, and D139.

The protein belongs to the RuvC family. As to quaternary structure, homodimer which binds Holliday junction (HJ) DNA. The HJ becomes 2-fold symmetrical on binding to RuvC with unstacked arms; it has a different conformation from HJ DNA in complex with RuvA. In the full resolvosome a probable DNA-RuvA(4)-RuvB(12)-RuvC(2) complex forms which resolves the HJ. Mg(2+) serves as cofactor.

It localises to the cytoplasm. It catalyses the reaction Endonucleolytic cleavage at a junction such as a reciprocal single-stranded crossover between two homologous DNA duplexes (Holliday junction).. Its function is as follows. The RuvA-RuvB-RuvC complex processes Holliday junction (HJ) DNA during genetic recombination and DNA repair. Endonuclease that resolves HJ intermediates. Cleaves cruciform DNA by making single-stranded nicks across the HJ at symmetrical positions within the homologous arms, yielding a 5'-phosphate and a 3'-hydroxyl group; requires a central core of homology in the junction. The consensus cleavage sequence is 5'-(A/T)TT(C/G)-3'. Cleavage occurs on the 3'-side of the TT dinucleotide at the point of strand exchange. HJ branch migration catalyzed by RuvA-RuvB allows RuvC to scan DNA until it finds its consensus sequence, where it cleaves and resolves the cruciform DNA. The sequence is that of Crossover junction endodeoxyribonuclease RuvC from Shewanella woodyi (strain ATCC 51908 / MS32).